The following is a 222-amino-acid chain: Neurotrophic factor BDNF precursor form (222 aa).

Positions 1–4 (CMKA) are cleaved as a signal peptide. A propeptide spanning residues 5–113 (APMKEVSVRG…AANMSMRVRR (109 aa)) is cleaved from the precursor. Asn106 is a glycosylation site (N-linked (GlcNAc...) asparagine). 2 disulfides stabilise this stretch: Cys126-Cys193 and Cys171-Cys222.

This sequence belongs to the NGF-beta family.

It localises to the secreted. In terms of biological role, promotes the survival of neuronal populations that are all located either in the central nervous system or directly connected to it. This is Neurotrophic factor BDNF precursor form (BDNF) from Xenopeltis unicolor (Sunbeam snake).